The chain runs to 386 residues: Succinate--CoA ligase [ADP-forming] subunit beta (386 aa).

In terms of domain architecture, ATP-grasp spans 9-244 (KDLLASYDVP…PSQENVRDVL (236 aa)). ATP is bound by residues K46, 53 to 55 (GRG), V102, and E107. Mg(2+) is bound by residues N199 and D213. Substrate contacts are provided by residues N264 and 321–323 (GIM).

The protein belongs to the succinate/malate CoA ligase beta subunit family. As to quaternary structure, heterotetramer of two alpha and two beta subunits. Requires Mg(2+) as cofactor.

The enzyme catalyses succinate + ATP + CoA = succinyl-CoA + ADP + phosphate. It catalyses the reaction GTP + succinate + CoA = succinyl-CoA + GDP + phosphate. The protein operates within carbohydrate metabolism; tricarboxylic acid cycle; succinate from succinyl-CoA (ligase route): step 1/1. In terms of biological role, succinyl-CoA synthetase functions in the citric acid cycle (TCA), coupling the hydrolysis of succinyl-CoA to the synthesis of either ATP or GTP and thus represents the only step of substrate-level phosphorylation in the TCA. The beta subunit provides nucleotide specificity of the enzyme and binds the substrate succinate, while the binding sites for coenzyme A and phosphate are found in the alpha subunit. The protein is Succinate--CoA ligase [ADP-forming] subunit beta of Chlamydia pneumoniae (Chlamydophila pneumoniae).